Reading from the N-terminus, the 286-residue chain is 33 kDa chaperonin (286 aa).

Intrachain disulfides connect C225–C227 and C258–C261.

Belongs to the HSP33 family. In terms of processing, under oxidizing conditions two disulfide bonds are formed involving the reactive cysteines. Under reducing conditions zinc is bound to the reactive cysteines and the protein is inactive.

The protein localises to the cytoplasm. Functionally, redox regulated molecular chaperone. Protects both thermally unfolding and oxidatively damaged proteins from irreversible aggregation. Plays an important role in the bacterial defense system toward oxidative stress. The protein is 33 kDa chaperonin of Shewanella frigidimarina (strain NCIMB 400).